Reading from the N-terminus, the 281-residue chain is L-ornithine N(alpha)-acyltransferase (281 aa).

This sequence belongs to the acetyltransferase family. OlsB subfamily.

It catalyses the reaction a (3R)-hydroxyacyl-[ACP] + L-ornithine = a lyso-ornithine lipid + holo-[ACP] + H(+). It participates in lipid metabolism. Functionally, catalyzes the first step in the biosynthesis of ornithine lipids, which are phosphorus-free membrane lipids. Catalyzes the 3-hydroxyacyl-acyl carrier protein-dependent acylation of ornithine to form lyso-ornithine lipid (LOL). The sequence is that of L-ornithine N(alpha)-acyltransferase from Brucella abortus (strain 2308).